The sequence spans 186 residues: Inosine/xanthosine triphosphatase (186 aa).

Mg(2+) is bound at residue Gln75.

Belongs to the YjjX NTPase family. In terms of assembly, homodimer. The cofactor is Mg(2+). It depends on Mn(2+) as a cofactor.

The catalysed reaction is XTP + H2O = XDP + phosphate + H(+). The enzyme catalyses ITP + H2O = IDP + phosphate + H(+). Its function is as follows. Phosphatase that hydrolyzes non-canonical purine nucleotides such as XTP and ITP to their respective diphosphate derivatives. Probably excludes non-canonical purines from DNA/RNA precursor pool, thus preventing their incorporation into DNA/RNA and avoiding chromosomal lesions. This is Inosine/xanthosine triphosphatase from Shewanella baltica (strain OS185).